A 226-amino-acid chain; its full sequence is MEPIKNLPRLCRTLGYEFKNIELLTQALTHRSAANKHNERLEFLGDSILSIVISDALYHQFPKATEGDLSRMRATLVRGDTLTIIAQEFKLGDYLYLGPGELKSGGFRRESILADAVEAIIGAVYLDSDLEVCRALLLKWYAERLAEIQPGISQKDAKTLLQEHLQGFKKPLPDYQVINIEGDAHDQTFTVECRIEDLSQSVIGVASSRRKAEQIAAAQVLELLKK.

An RNase III domain is found at 7–129 (LPRLCRTLGY…IIGAVYLDSD (123 aa)). Glu42 is a Mg(2+) binding site. Residue Asp46 is part of the active site. The Mg(2+) site is built by Asp115 and Glu118. Glu118 is a catalytic residue. Residues 156–226 (DAKTLLQEHL…AAQVLELLKK (71 aa)) enclose the DRBM domain.

The protein belongs to the ribonuclease III family. As to quaternary structure, homodimer. Mg(2+) is required as a cofactor.

The protein resides in the cytoplasm. It catalyses the reaction Endonucleolytic cleavage to 5'-phosphomonoester.. Its function is as follows. Digests double-stranded RNA. Involved in the processing of primary rRNA transcript to yield the immediate precursors to the large and small rRNAs (23S and 16S). Processes some mRNAs, and tRNAs when they are encoded in the rRNA operon. Processes pre-crRNA and tracrRNA of type II CRISPR loci if present in the organism. The sequence is that of Ribonuclease 3 from Shewanella baltica (strain OS185).